The following is a 160-amino-acid chain: Ureidoglycolate lyase (160 aa).

Belongs to the ureidoglycolate lyase family. As to quaternary structure, homodimer. It depends on Ni(2+) as a cofactor.

It catalyses the reaction (S)-ureidoglycolate = urea + glyoxylate. Its pathway is nitrogen metabolism; (S)-allantoin degradation. Functionally, catalyzes the catabolism of the allantoin degradation intermediate (S)-ureidoglycolate, generating urea and glyoxylate. Involved in the anaerobic utilization of allantoin as sole nitrogen source. Reinforces the induction of genes involved in the degradation of allantoin and glyoxylate by producing glyoxylate. The sequence is that of Ureidoglycolate lyase from Escherichia coli (strain K12 / MC4100 / BW2952).